The following is a 449-amino-acid chain: GTPase Der (449 aa).

2 consecutive EngA-type G domains span residues 2–169 and 180–355; these read FTVA…QLPP and VRFC…EQLT. GTP-binding positions include 8 to 15, 55 to 59, 118 to 121, 186 to 193, 233 to 237, and 298 to 301; these read GRPNVGKS, DTGGL, NKSE, GKPNVGKS, DTAGI, and NKWD. The KH-like domain maps to 356-440; the sequence is KKISTSLLND…PITLYFKSKN (85 aa).

Belongs to the TRAFAC class TrmE-Era-EngA-EngB-Septin-like GTPase superfamily. EngA (Der) GTPase family. In terms of assembly, associates with the 50S ribosomal subunit.

Its function is as follows. GTPase that plays an essential role in the late steps of ribosome biogenesis. This is GTPase Der from Mycoplasma pneumoniae (strain ATCC 29342 / M129 / Subtype 1) (Mycoplasmoides pneumoniae).